The following is a 104-amino-acid chain: Iron-sulfur cluster assembly protein CyaY (104 aa).

It belongs to the frataxin family.

Its function is as follows. Involved in iron-sulfur (Fe-S) cluster assembly. May act as a regulator of Fe-S biogenesis. The chain is Iron-sulfur cluster assembly protein CyaY from Vibrio vulnificus (strain CMCP6).